A 392-amino-acid chain; its full sequence is Glyceraldehyde-3-phosphate dehydrogenase A, chloroplastic (392 aa).

The N-terminal 56 residues, 1-56 (NSSLQVSNKGFSEFSGLRTSSAIPFGRKTNDDLLSVVAFQTSVIGGGNSKRGVVEA), are a transit peptide targeting the chloroplast. NADP(+)-binding positions include 67 to 68 (RI), aspartate 91, and arginine 136. Residues 208 to 210 (SCT), threonine 239, arginine 254, 267 to 268 (TG), and arginine 290 each bind D-glyceraldehyde 3-phosphate. Cysteine 209 functions as the Nucleophile in the catalytic mechanism. Asparagine 372 is an NADP(+) binding site.

It belongs to the glyceraldehyde-3-phosphate dehydrogenase family. In terms of assembly, tetramer of either four A chains (GAPDH 2) or two A and two B chains (GAPDH 1).

The protein resides in the plastid. It localises to the chloroplast. The enzyme catalyses D-glyceraldehyde 3-phosphate + phosphate + NADP(+) = (2R)-3-phospho-glyceroyl phosphate + NADPH + H(+). Its pathway is carbohydrate biosynthesis; Calvin cycle. The protein is Glyceraldehyde-3-phosphate dehydrogenase A, chloroplastic (GAPA) of Nicotiana tabacum (Common tobacco).